We begin with the raw amino-acid sequence, 328 residues long: tRNA dimethylallyltransferase (328 aa).

Residue 10 to 17 (GPTASGKT) participates in ATP binding. 12–17 (TASGKT) contributes to the substrate binding site.

This sequence belongs to the IPP transferase family. As to quaternary structure, monomer. The cofactor is Mg(2+).

It catalyses the reaction adenosine(37) in tRNA + dimethylallyl diphosphate = N(6)-dimethylallyladenosine(37) in tRNA + diphosphate. Its function is as follows. Catalyzes the transfer of a dimethylallyl group onto the adenine at position 37 in tRNAs that read codons beginning with uridine, leading to the formation of N6-(dimethylallyl)adenosine (i(6)A). The chain is tRNA dimethylallyltransferase from Bifidobacterium longum subsp. infantis (strain ATCC 15697 / DSM 20088 / JCM 1222 / NCTC 11817 / S12).